The chain runs to 190 residues: MSGLRPALSTFLFLLLITGGVYPLLTTALGQWWYPWQANGSLIREGDTVRGSALIGQNFTGNGYFHGRPSATAEMPYNPQASGGSNLAVSNPELDKQIAARVAALRAANPDASTNVPVELVTASASGLDNNITPQAAAWQIPRIAKARNLSVEQLTQLIAKYSQQPLVKYIGQPVVNIVELNLALDKLDE.

The helical transmembrane segment at 10–30 (TFLFLLLITGGVYPLLTTALG) threads the bilayer.

Belongs to the KdpC family. The system is composed of three essential subunits: KdpA, KdpB and KdpC.

The protein localises to the cell inner membrane. In terms of biological role, part of the high-affinity ATP-driven potassium transport (or Kdp) system, which catalyzes the hydrolysis of ATP coupled with the electrogenic transport of potassium into the cytoplasm. This subunit acts as a catalytic chaperone that increases the ATP-binding affinity of the ATP-hydrolyzing subunit KdpB by the formation of a transient KdpB/KdpC/ATP ternary complex. The protein is Potassium-transporting ATPase KdpC subunit of Shigella flexneri serotype 5b (strain 8401).